The sequence spans 74 residues: Protein SlyX homolog (74 aa).

This sequence belongs to the SlyX family.

This Neisseria meningitidis serogroup A / serotype 4A (strain DSM 15465 / Z2491) protein is Protein SlyX homolog.